We begin with the raw amino-acid sequence, 75 residues long: Sec-independent protein translocase protein TatA (75 aa).

The chain crosses the membrane as a helical span at residues 1–21 (MGSFSIWHWLVVLAIVLLVFG). Positions 41 to 75 (KGMRDEDKPNAQLGDESRTQDASRTAQDEHDRNAR) are disordered.

It belongs to the TatA/E family. As to quaternary structure, the Tat system comprises two distinct complexes: a TatABC complex, containing multiple copies of TatA, TatB and TatC subunits, and a separate TatA complex, containing only TatA subunits. Substrates initially bind to the TatABC complex, which probably triggers association of the separate TatA complex to form the active translocon.

It is found in the cell inner membrane. Its function is as follows. Part of the twin-arginine translocation (Tat) system that transports large folded proteins containing a characteristic twin-arginine motif in their signal peptide across membranes. TatA could form the protein-conducting channel of the Tat system. This Stenotrophomonas maltophilia (strain K279a) protein is Sec-independent protein translocase protein TatA.